The following is a 430-amino-acid chain: MAAGLRLLLAGLCWSQFRVEDAASPPPPPAPVRCALLEGVGRGGGLPGGGNARPALLRFGGDAETPPEPGPEPEVTFNVSDPWGTLTPLGVPPRTPPSCELNPTNPQTGSDPWSRPLHPDARSPPTAGGQWWVAAVGTPQYGVTALLQGGMGTEGTITAAVALAVLTHTPTLRARVGSPIHLHCAFAAPPSSFVLEWRHQNRGAGRVLLAYDSSTARAPRAHPGAELLLGTRDGDGVTAVTLRLARPSPGDEGTYICSVFLPHGHTQTVLQLHVFEPPKVTLSPKNLVVAPGTSAELRCHVSGFYPLDVTVTWQRRAGGSGTSQSPRDTVMDSWTSGHRQAADGTYSRTAAARLIPARPQHHGDIYSCVVTHTALAKPMRVSVRLLLAGTEGPHLEDITGLFLVAFVLCGLIRWLYPKAARPKEETKKSQ.

A signal peptide spans 1–15; sequence MAAGLRLLLAGLCWS. Topologically, residues 16-399 are lumenal; that stretch reads QFRVEDAASP…TEGPHLEDIT (384 aa). A disulfide bridge connects residues cysteine 34 and cysteine 99. The disordered stretch occupies residues 61–128; the sequence is GDAETPPEPG…PDARSPPTAG (68 aa). Asparagine 78 is a glycosylation site (N-linked (GlcNAc...) asparagine). Positions 101–111 are enriched in polar residues; it reads LNPTNPQTGSD. Ig-like C1-type domains are found at residues 139–273 and 278–382; these read PQYG…LQLH and PKVT…MRVS. Cysteine 299 and cysteine 368 are oxidised to a cystine. A disordered region spans residues 316-342; it reads RAGGSGTSQSPRDTVMDSWTSGHRQAA. The span at 322–338 shows a compositional bias: polar residues; that stretch reads TSQSPRDTVMDSWTSGH. Residues 400–417 traverse the membrane as a helical segment; the sequence is GLFLVAFVLCGLIRWLYP. Over 418-430 the chain is Cytoplasmic; the sequence is KAARPKEETKKSQ.

Interacts with TAP1 and is thus a subunit of the TAP complex. Interaction with TAP1 is TAP2 independent and is required for efficient peptide-TAP interaction. Obligatory mediator for the interaction between newly assembled MHC class I molecules, calreticulin, ERp57 and TAP. Up to 4 MHC class I/tapasin complexes bind to 1 TAP.

The protein localises to the endoplasmic reticulum membrane. Involved in the association of MHC class I with transporter associated with antigen processing (TAP) and in the assembly of MHC class I with peptide (peptide loading). In Gallus gallus (Chicken), this protein is Tapasin (TAPBP).